Here is a 238-residue protein sequence, read N- to C-terminus: Ubiquinone biosynthesis O-methyltransferase (238 aa).

Positions 38, 58, 79, and 124 each coordinate S-adenosyl-L-methionine.

It belongs to the methyltransferase superfamily. UbiG/COQ3 family.

It carries out the reaction a 3-demethylubiquinol + S-adenosyl-L-methionine = a ubiquinol + S-adenosyl-L-homocysteine + H(+). The catalysed reaction is a 3-(all-trans-polyprenyl)benzene-1,2-diol + S-adenosyl-L-methionine = a 2-methoxy-6-(all-trans-polyprenyl)phenol + S-adenosyl-L-homocysteine + H(+). The protein operates within cofactor biosynthesis; ubiquinone biosynthesis. Its function is as follows. O-methyltransferase that catalyzes the 2 O-methylation steps in the ubiquinone biosynthetic pathway. The sequence is that of Ubiquinone biosynthesis O-methyltransferase from Acinetobacter baylyi (strain ATCC 33305 / BD413 / ADP1).